The chain runs to 277 residues: Phosphatidylglycerol--prolipoprotein diacylglyceryl transferase (277 aa).

3 consecutive transmembrane segments (helical) span residues 17 to 37 (LAIH…MLLG), 63 to 83 (ILFL…CLFY), and 101 to 121 (GGMA…WFAH). Arg146 contacts a 1,2-diacyl-sn-glycero-3-phospho-(1'-sn-glycerol). Transmembrane regions (helical) follow at residues 182–202 (SQVY…WLYA), 209–229 (GQVA…AEQF), and 234–254 (AFLG…LPMI).

Belongs to the Lgt family.

The protein resides in the cell inner membrane. It carries out the reaction L-cysteinyl-[prolipoprotein] + a 1,2-diacyl-sn-glycero-3-phospho-(1'-sn-glycerol) = an S-1,2-diacyl-sn-glyceryl-L-cysteinyl-[prolipoprotein] + sn-glycerol 1-phosphate + H(+). The protein operates within protein modification; lipoprotein biosynthesis (diacylglyceryl transfer). In terms of biological role, catalyzes the transfer of the diacylglyceryl group from phosphatidylglycerol to the sulfhydryl group of the N-terminal cysteine of a prolipoprotein, the first step in the formation of mature lipoproteins. The sequence is that of Phosphatidylglycerol--prolipoprotein diacylglyceryl transferase from Verminephrobacter eiseniae (strain EF01-2).